The chain runs to 859 residues: Heterogeneous nuclear ribonucleoprotein U-like protein 1 (859 aa).

Positions 1 to 103 (MDVRRLKVNE…GPDGHYVMDN (103 aa)) are necessary for interaction with HRMT1L1. The region spanning 3-37 (VRRLKVNELREELQRRGLDTRGLKAELAERLLAAL) is the SAP domain. A disordered region spans residues 36–131 (ALEAEEPEDE…SSYDRRPLDM (96 aa)). Over residues 38–54 (EAEEPEDERELEADDDP) the composition is skewed to acidic residues. A compositionally biased stretch (pro residues) spans 77-88 (QPPPPGLQPHPE). A Glycyl lysine isopeptide (Lys-Gly) (interchain with G-Cter in SUMO1); alternate cross-link involves residue Lys117. Lys117 participates in a covalent cross-link: Glycyl lysine isopeptide (Lys-Gly) (interchain with G-Cter in SUMO2); alternate. Residues 118 to 130 (QENESSYDRRPLD) show a composition bias toward basic and acidic residues. A Glycyl lysine isopeptide (Lys-Gly) (interchain with G-Cter in SUMO1); alternate cross-link involves residue Lys143. Lys143 participates in a covalent cross-link: Glycyl lysine isopeptide (Lys-Gly) (interchain with G-Cter in SUMO2); alternate. The disordered stretch occupies residues 146-206 (MKQEAPPSFL…QPPAEEDEDD (61 aa)). Residues Lys147 and Lys163 each participate in a glycyl lysine isopeptide (Lys-Gly) (interchain with G-Cter in SUMO2) cross-link. Residues 174-193 (RPFEENRGRGYFEHREDRRG) are compositionally biased toward basic and acidic residues. The B30.2/SPRY domain maps to 192–389 (RGRSPQPPAE…VEFNFGQRAE (198 aa)). Ser195 is modified (phosphoserine). A Phosphothreonine modification is found at Thr210. Residues 214 to 859 (IDTYNCDLHF…GSTQGGTSTQ (646 aa)) form a necessary for interaction with TP53 region. Residues Lys271 and Lys450 each participate in a glycyl lysine isopeptide (Lys-Gly) (interchain with G-Cter in SUMO2) cross-link. The segment at 457-595 (NAIMDKMRVM…EEADKLVRQY (139 aa)) is necessary for interaction with BRD7 and transcriptional activation. Ser513 carries the post-translational modification Phosphoserine. A Glycyl lysine isopeptide (Lys-Gly) (interchain with G-Cter in SUMO2) cross-link involves residue Lys540. Positions 595–612 (YNEEGRKAGPPPEKRFDS) are enriched in basic and acidic residues. Residues 595-814 (YNEEGRKAGP…PPTAQTYPQP (220 aa)) form a disordered region. Tandem repeats lie at residues 613-615 (RGG), 620-622 (RGG), 639-641 (RGG), 645-647 (RGG), and 659-661 (RGG). Composition is skewed to gly residues over residues 613–626 (RGGG…GGGF) and 634–670 (PPGG…GGGY). The tract at residues 613–661 (RGGGFRGRGGGGGFQRYDNRGPPGGNRGGFQNRGGGGGSGGGGGNYRGG) is 5 X 3 AA repeats of R-G-G. Residues 613-661 (RGGGFRGRGGGGGFQRYDNRGPPGGNRGGFQNRGGGGGSGGGGGNYRGG) are necessary for transcription repression. Arg639 is modified (asymmetric dimethylarginine). 2 positions are modified to asymmetric dimethylarginine; alternate: Arg645 and Arg659. Arg645 and Arg659 each carry omega-N-methylarginine; alternate. Residues Arg664 and Arg674 each carry the omega-N-methylarginine modification. The span at 671-696 (NQNRWGNNNRDNNNSNNRGNYNRAPQ) shows a compositional bias: low complexity. The segment covering 697 to 720 (QQPPPQQPPPPQPPPQQPPPPPSY) has biased composition (pro residues). The residue at position 721 (Ser721) is a Phosphoserine. Residues 728–744 (GASSYNKNSNIPGSSAN) show a composition bias toward polar residues. The segment covering 745–775 (TSTPTVSSYTPPQPSYSQPPYNQGGYTQGYT) has biased composition (low complexity). 2 stretches are compositionally biased toward pro residues: residues 776-786 (APPPPPPPPPA) and 796-807 (NPAPYTPPPPPT).

In terms of assembly, interacts with BRD7, PRMT2, TP53 and NXF1. Associates with histones and BRD7. Methylated.

It is found in the nucleus. In terms of biological role, acts as a basic transcriptional regulator. Represses basic transcription driven by several virus and cellular promoters. When associated with BRD7, activates transcription of glucocorticoid-responsive promoter in the absence of ligand-stimulation. Also plays a role in mRNA processing and transport. Binds avidly to poly(G) and poly(C) RNA homopolymers in vitro. The sequence is that of Heterogeneous nuclear ribonucleoprotein U-like protein 1 (Hnrnpul1) from Mus musculus (Mouse).